We begin with the raw amino-acid sequence, 615 residues long: MPSRKFADGEVVRGRWPGSSLYYEVEILSHDSTSQLYTVKYKDGTELELKENDIKPLTSFRQRKGGSTSSSPSRRRGSRSRSRSRSPGRPPKSARRSASASHQADIKEARREVEVKLTPLILKPFGNSISRYNGEPEHIERNDAPHKNTQEKFSLSQESSYIATQYSLRPRREEVKLKEIDSKEEKYVAKELAVRTFEVTPIRAKDLEFGGVPGVFLIMFGLPVFLFLLLLMCKQKDPSLLNFPPPLPALYELWETRVFGVYLLWFLIQVLFYLLPIGKVVEGTPLIDGRRLKYRLNGFYAFILTSAVIGTSLFQGVEFHYVYSHFLQFALAATVFCVVLSVYLYMRSLKAPRNDLSPASSGNAVYDFFIGRELNPRIGTFDLKYFCELRPGLIGWVVINLVMLLAEMKIQDRAVPSLAMILVNSFQLLYVVDALWNEEALLTTMDIIHDGFGFMLAFGDLVWVPFIYSFQAFYLVSHPNEVSWPMASLIIVLKLCGYVIFRGANSQKNAFRKNPSDPKLAHLKTIHTSTGKNLLVSGWWGFVRHPNYLGDLIMALAWSLPCGFNHILPYFYIIYFTMLLVHREARDEYHCKKKYGVAWEKYCQRVPYRIFPYIY.

The 62-residue stretch at 1–62 folds into the Tudor domain; sequence MPSRKFADGE…DIKPLTSFRQ (62 aa). Over 1–211 the chain is Nuclear; that stretch reads MPSRKFADGE…IRAKDLEFGG (211 aa). Residues 52-109 are disordered; the sequence is NDIKPLTSFRQRKGGSTSSSPSRRRGSRSRSRSRSPGRPPKSARRSASASHQADIKEA. Lys-55 is subject to N6-acetyllysine. The residue at position 58 (Thr-58) is a Phosphothreonine. Residues Ser-59 and Ser-67 each carry the phosphoserine modification. Residues Ser-71 and Ser-86 each carry the phosphoserine; by CDK1 modification. Basic residues predominate over residues 73–86; that stretch reads SRRRGSRSRSRSRS. Ser-97 and Ser-99 each carry phosphoserine. Thr-118 carries the phosphothreonine modification. Phosphoserine is present on Ser-128. A Phosphothreonine modification is found at Thr-200. Transmembrane regions (helical) follow at residues 212–232, 258–278, 299–319, 326–346, 386–406, 447–467, 481–501, and 561–581; these read VPGV…LLLM, VFGV…LPIG, FYAF…GVEF, FLQF…YLYM, FCEL…MLLA, IIHD…VPFI, EVSW…YVIF, and PCGF…MLLV. N6-acetyllysine is present on residues Lys-594 and Lys-601.

This sequence belongs to the ERG4/ERG24 family. Interacts with CBX5. Interacts with DNA. Interaction with DNA is sequence independent with higher affinity for supercoiled and relaxed circular DNA than linear DNA. Interacts with lamin B. Interacts with CLNK. Interacts with TMEM147; promoting LBR localization to the nucleus inner membrane. In terms of processing, phosphorylated by CDK1 in mitosis when the inner nuclear membrane breaks down into vesicles that dissociate from the lamina and the chromatin. It is phosphorylated by different protein kinases in interphase when the membrane is associated with these structures. Phosphorylation of LBR and HP1 proteins may be responsible for some of the alterations in chromatin organization and nuclear structure which occur at various times during the cell cycle. Phosphorylated by SRPK1. In late anaphase LBR is dephosphorylated, probably by PP1 and/or PP2A, allowing reassociation with chromatin. In terms of tissue distribution, expressed in the bone marrow, liver, heart, adrenal gland, lung, placenta and uterus. Expressed in osteoclasts and osteoblast-like cells.

Its subcellular location is the nucleus inner membrane. The protein localises to the endoplasmic reticulum membrane. It is found in the cytoplasm. It localises to the nucleus. The catalysed reaction is 5alpha-cholest-8,14-dien-3beta-ol + NADPH + H(+) = 5alpha-cholest-8-en-3beta-ol + NADP(+). It carries out the reaction 4,4-dimethyl-5alpha-cholesta-8,24-dien-3beta-ol + NADP(+) = 4,4-dimethyl-5alpha-cholesta-8,14,24-trien-3beta-ol + NADPH + H(+). It catalyses the reaction 4,4-dimethyl-8,14-cholestadien-3beta-ol + NADPH + H(+) = 4,4-dimethyl-5alpha-cholest-8-en-3beta-ol + NADP(+). It functions in the pathway steroid biosynthesis; cholesterol biosynthesis. Its function is as follows. Catalyzes the reduction of the C14-unsaturated bond of lanosterol, as part of the metabolic pathway leading to cholesterol biosynthesis. Plays a critical role in myeloid cell cholesterol biosynthesis which is essential to both myeloid cell growth and functional maturation. Mediates the activation of NADPH oxidases, perhaps by maintaining critical levels of cholesterol required for membrane lipid raft formation during neutrophil differentiation. Anchors the lamina and the heterochromatin to the inner nuclear membrane. This Homo sapiens (Human) protein is Delta(14)-sterol reductase LBR (LBR).